The primary structure comprises 108 residues: Protein SMALL AUXIN UP-REGULATED RNA 51 (108 aa).

This sequence belongs to the ARG7 family. In terms of tissue distribution, expressed in organ primordia. Hardly observed in leaves.

The protein localises to the cell membrane. Its function is as follows. Provide a mechanistic link between auxin and plasma membrane H(+)-ATPases (PM H(+)-ATPases, e.g. AHA1 and AHA2), and triggers PM H(+)-ATPases activity by promoting phosphorylation of their C-terminal autoinhibitory domain as a result of PP2C-D subfamily of type 2C phosphatases inhibition, thus leading to the acidification of the apoplast and the facilitation of solutes and water uptake to drive cell expansion. Triggers plant growth probably by promoting cell elongation. Regulates branch angles and bending. This Arabidopsis thaliana (Mouse-ear cress) protein is Protein SMALL AUXIN UP-REGULATED RNA 51.